We begin with the raw amino-acid sequence, 202 residues long: Dephospho-CoA kinase (202 aa).

One can recognise a DPCK domain in the interval 6 to 202 (KISVTGDPSS…QCFKALKGTI (197 aa)). 14-19 (SSGKTE) is an ATP binding site.

This sequence belongs to the CoaE family.

It is found in the cytoplasm. The enzyme catalyses 3'-dephospho-CoA + ATP = ADP + CoA + H(+). The protein operates within cofactor biosynthesis; coenzyme A biosynthesis; CoA from (R)-pantothenate: step 5/5. Functionally, catalyzes the phosphorylation of the 3'-hydroxyl group of dephosphocoenzyme A to form coenzyme A. The sequence is that of Dephospho-CoA kinase from Chlamydia muridarum (strain MoPn / Nigg).